Reading from the N-terminus, the 562-residue chain is Protein wntless (562 aa).

Over 1-13 (MSGTILENLSGRK) the chain is Cytoplasmic. The helical transmembrane segment at 14–34 (LSILVGSLLLCQVLCFLLGGL) threads the bilayer. The Lumenal segment spans residues 35 to 239 (YAPVPAGHTN…AIHQNGGFTH (205 aa)). Asparagine 58 carries an N-linked (GlcNAc...) asparagine glycan. The chain crosses the membrane as a helical span at residues 240–260 (VWLMLKTLLFPFVVGIMVWFW). Residues 261-270 (RRVHLLQRSP) lie on the Cytoplasmic side of the membrane. Residues 271 to 291 (ALLEYMLLYLGGALTFLNLPL) form a helical membrane-spanning segment. The Lumenal portion of the chain corresponds to 292–311 (EYLSLTIEMPYMLLLSDIRQ). Residues 312-332 (GIFYAMLLSFWLVFAGEHMLI) form a helical membrane-spanning segment. Residues 333–344 (QDSSNKSTIRSR) lie on the Cytoplasmic side of the membrane. A helical membrane pass occupies residues 345–365 (YWKHLSAVVVGCISLFVFDIS). The Lumenal segment spans residues 366–386 (ERGVQLRNPFYSIWTTPLGAK). The helical transmembrane segment at 387–407 (VAMSFILLAGVSAAVYFLFLC) threads the bilayer. Residues 408–441 (YMISKVFKNIGDKRTSLPSMSQARRLHYEGLIYR) lie on the Cytoplasmic side of the membrane. The helical transmembrane segment at 442 to 462 (FKFLMLATLLCAALTVTGFIM) threads the bilayer. The Lumenal segment spans residues 463–482 (GQMAEGQWKWNDDVEIQLTS). The helical transmembrane segment at 483-503 (AFLTGVYGMWNIYIFALLILY) threads the bilayer. The Cytoplasmic portion of the chain corresponds to 504–562 (APSHKQWPTMHHSDETTQSNENIVASAASEEIEFSNLPSDSNPSEISSLTSFTRKVAFE). The interval 538-562 (SNLPSDSNPSEISSLTSFTRKVAFE) is disordered. The segment covering 539–556 (NLPSDSNPSEISSLTSFT) has biased composition (polar residues).

The protein belongs to the wntless family. As to quaternary structure, interacts with wg; in the Golgi. Interacts with Vps35, a component of the retromer complex; wls stability is regulated by Vps35.

It localises to the presynaptic cell membrane. The protein resides in the postsynaptic cell membrane. The protein localises to the cell membrane. It is found in the endoplasmic reticulum membrane. Its subcellular location is the endosome membrane. It localises to the golgi apparatus membrane. Functionally, a segment polarity gene required for wingless (wg)-dependent patterning processes, acting in both wg-sending cells and wg-target cells. In non-neuronal cells wls directs wg secretion. The wls traffic loop encompasses the Golgi, the cell surface, an endocytic compartment and a retrograde route leading back to the Golgi, and involves clathrin-mediated endocytosis and the retromer complex (a conserved protein complex consisting of Vps35 and Vps26). In neuronal cells (the larval motorneuron NMJ), the wg signal moves across the synapse via the release of wls-containing exosome-like vesicles. Postsynaptic wls is required for the trafficking of fz2 through the fz2-interacting protein Grip. This chain is Protein wntless, found in Drosophila pseudoobscura pseudoobscura (Fruit fly).